The chain runs to 342 residues: Phosphoribosylformylglycinamidine cyclo-ligase (342 aa).

It belongs to the AIR synthase family.

The protein resides in the cytoplasm. It catalyses the reaction 2-formamido-N(1)-(5-O-phospho-beta-D-ribosyl)acetamidine + ATP = 5-amino-1-(5-phospho-beta-D-ribosyl)imidazole + ADP + phosphate + H(+). The protein operates within purine metabolism; IMP biosynthesis via de novo pathway; 5-amino-1-(5-phospho-D-ribosyl)imidazole from N(2)-formyl-N(1)-(5-phospho-D-ribosyl)glycinamide: step 2/2. This Staphylococcus aureus (strain Mu3 / ATCC 700698) protein is Phosphoribosylformylglycinamidine cyclo-ligase.